The following is an 859-amino-acid chain: Volume-regulated anion channel subunit LRRC8D (859 aa).

The Cytoplasmic segment spans residues 1–22 (MFTLAEVASLNDIQPTYRILKP). A helical transmembrane segment spans residues 23 to 48 (WWDVFMDYLAVVMLMVAIFAGTMQLT). Topologically, residues 49–164 (KDQVVCLPVL…YHLALPWYSK (116 aa)) are extracellular. An intrachain disulfide couples C54 to C355. A disordered region spans residues 110 to 138 (IPLQATHPHAESTLPNQEAKKEKRDPTGR). The span at 127 to 138 (EAKKEKRDPTGR) shows a compositional bias: basic and acidic residues. A helical transmembrane segment spans residues 165–183 (YFPYLALIHTIILMVSSNF). Residues 184–309 (WFKYPKTCSK…EDSDLIYKLY (126 aa)) are Cytoplasmic-facing. The interval 222–252 (SEENKQRITGAQTLPKHVSTSSDEGSPSAST) is disordered. Residues 228–252 (RITGAQTLPKHVSTSSDEGSPSAST) show a composition bias toward polar residues. Residues S242, S243, and S247 each carry the phosphoserine modification. Residues 310–331 (VVQTLIKTAKFIFILCYTANFV) form a helical membrane-spanning segment. Topologically, residues 332-361 (NAISFEHVCKPKVEHLTGYEVFECTHNMAY) are extracellular. A helical transmembrane segment spans residues 362 to 387 (MLKKLLISYISIICVYGFICLYTLFW). At 388-859 (LFRIPLKEYS…DVNVPFANGI (472 aa)) the chain is on the cytoplasmic side. 13 LRR repeats span residues 515 to 535 (NLQELHLCHCPAKVEQTAFSF), 539 to 560 (HLRCLHVKFTDVAEIPAWVYLL), 562 to 583 (NLRELYLIGNLNSENNKMIGLE), 590 to 610 (HLKILHVKSNLTKVPSNITDV), 613 to 633 (HLTKLVIHNDGTKLLVLNSLK), 637 to 658 (NVAELELQNCELERIPHAIFSL), 660 to 681 (NLQELDLKSNNIRTIEEIISFQ), 685 to 706 (RLTCLKLWHNKIVAIPPSITHV), 708 to 729 (NLESLYFSNNKLESLPTAVFSL), 731 to 752 (KLRCLDVSYNNISTIPIEIGLL), 754 to 775 (NLQHLHITGNKVDILPKQLFKC), 777 to 798 (KLRTLNLGQNCIASLPEKISQL), and 800 to 821 (QLTQLELKGNCLDRLPAQLGQC).

The protein belongs to the LRRC8 family. As to quaternary structure, heterohexamer; oligomerizes with other LRRC8 proteins (LRRC8A, LRRC8B, LRRC8C and/or LRRC8E) to form a heterohexamer. In vivo, the subunit composition may depend primarily on expression levels, and heterooligomeric channels containing various proportions of the different LRRC8 proteins may coexist. In terms of tissue distribution, expressed in pancreatic beta cells. Also expressed in glucagon-secreting pancreatic alpha cells.

The protein localises to the cell membrane. The protein resides in the endoplasmic reticulum membrane. It carries out the reaction chloride(in) = chloride(out). It catalyses the reaction iodide(out) = iodide(in). The catalysed reaction is taurine(out) = taurine(in). Its function is as follows. Non-essential component of the volume-regulated anion channel (VRAC, also named VSOAC channel), an anion channel required to maintain a constant cell volume in response to extracellular or intracellular osmotic changes. The VRAC channel conducts iodide better than chloride and can also conduct organic osmolytes like taurine. Plays a redundant role in the efflux of amino acids, such as aspartate, in response to osmotic stress family member (LRRC8B, LRRC8C, LRRC8D or LRRC8E); channel characteristics depend on the precise subunit composition. Also acts as a regulator of glucose-sensing in pancreatic beta cells: VRAC currents, generated in response to hypotonicity- or glucose-induced beta cell swelling, depolarize cells, thereby causing electrical excitation, leading to increase glucose sensitivity and insulin secretion. VRAC channels containing LRRC8D inhibit transport of immunoreactive cyclic dinucleotide GMP-AMP (2'-3'-cGAMP), an immune messenger produced in response to DNA virus in the cytosol. This chain is Volume-regulated anion channel subunit LRRC8D, found in Mus musculus (Mouse).